Reading from the N-terminus, the 318-residue chain is MRFNVVLFMLIVALLGGLSTCSSEVPIGFDTDELSFDMSLVLLTGDMQTKASDPNYTYATTEELTIQNCHVAVFDKDGKRIYFKNFYSKDLGEMKTIGNLSGYELQLEGVRTFGKEDKKVSVLVVANANNANNSPFDNLTTYDGVDNSYTAKTIAKGPVTASLLVKIGKSETTLKYNQDNAPVTVSLIQLSAKIEYTGVYKKENGELLEGFSLTKVAGLNASSKITIFNTSAVENGAFSDLAYPTTKPVTFYTYEISDAFKEVILSVQSGVEPKEYPFPANKFIKGNYYRIKGLKSSTEIEWVLENVEDKEVTLDPFE.

The first 24 residues, 1–24, serve as a signal peptide directing secretion; sequence MRFNVVLFMLIVALLGGLSTCSSE. A propeptide spanning residues 25–50 is cleaved from the precursor; it reads VPIGFDTDELSFDMSLVLLTGDMQTK.

Belongs to the bacteroidetes fimbrillin superfamily. FimA/Mfa1 family. In terms of assembly, may be part of the fimbrial tip.

Its subcellular location is the fimbrium. In terms of biological role, putative component of the fimbrium tip. Fimbriae are filamentous appendages on the cell surface that mediate cell adhesion and biofilm formation. The sequence is that of Putative fimbrium tip subunit Fim1F from Parabacteroides distasonis (strain ATCC 8503 / DSM 20701 / CIP 104284 / JCM 5825 / NCTC 11152).